A 138-amino-acid polypeptide reads, in one-letter code: Basic leucine zipper 8 (138 aa).

The interval 30-67 is disordered; it reads NLPATSDDSSRTAEDNERKRRRKVSNRESARRSRMRKQ. The span at 37–47 shows a compositional bias: basic and acidic residues; that stretch reads DSSRTAEDNER. A bZIP domain is found at 45–108; it reads NERKRRRKVS…EKVIEENMKL (64 aa). The segment at 47-68 is basic motif; it reads RKRRRKVSNRESARRSRMRKQR. The short motif at 48–55 is the Nuclear localization signal element; sequence KRRRKVSN. The segment at 73 to 87 is leucine-zipper; it reads LWSMLVQLINKNKSL.

It belongs to the bZIP family. Homodimer.

The protein resides in the nucleus. In Arabidopsis thaliana (Mouse-ear cress), this protein is Basic leucine zipper 8.